We begin with the raw amino-acid sequence, 165 residues long: NADH-quinone oxidoreductase subunit I (165 aa).

4Fe-4S ferredoxin-type domains follow at residues 57–86 (RRYENGEERCIACKLCEAVCPALAITIESE) and 96–125 (TRYDIDLTKCIFCGFCEESCPVDSIVETHI). C66, C69, C72, C76, C105, C108, C111, and C115 together coordinate [4Fe-4S] cluster.

This sequence belongs to the complex I 23 kDa subunit family. As to quaternary structure, NDH-1 is composed of 14 different subunits. Subunits NuoA, H, J, K, L, M, N constitute the membrane sector of the complex. [4Fe-4S] cluster is required as a cofactor.

The protein resides in the cell inner membrane. The enzyme catalyses a quinone + NADH + 5 H(+)(in) = a quinol + NAD(+) + 4 H(+)(out). NDH-1 shuttles electrons from NADH, via FMN and iron-sulfur (Fe-S) centers, to quinones in the respiratory chain. The immediate electron acceptor for the enzyme in this species is believed to be ubiquinone. Couples the redox reaction to proton translocation (for every two electrons transferred, four hydrogen ions are translocated across the cytoplasmic membrane), and thus conserves the redox energy in a proton gradient. This is NADH-quinone oxidoreductase subunit I from Methylibium petroleiphilum (strain ATCC BAA-1232 / LMG 22953 / PM1).